A 435-amino-acid chain; its full sequence is MNQGEIVYQDDDDYYDESEIYDNYEEGAEFIEVNGQLVPHNPNLQAQQNRPGTSSMIQQHNRSMEVNQGLVKDEPIDTSSHRVYVPPPRPVQRKLFQPGPSTPGSSQYTVRNLSNLSGSPSMYDRQPASLPRTVQPMGLEMGNSEQRKVYIDMKDHVSHIRLKTKKKVFAPGQRKPCNCTKSQCLKLYCDCFANGEFCRDCNCKDCHNNIEYDSQRSKAIRQSLERNPNAFKPKIGIARGGITDIERLHQKGCHCKKSGCLKNYCECYEAKVPCTDRCKCKGCQNTETYRMTRYKNSGGAVSNTNALMSLTNASSTATPDSGPGSVVTDEHGDDYEDMLLSHKPKVEMDPRRFPWYYMTDEVVEAATMCMVAQAEEALNYEKVQTEDEKLINMEKLVLREFGRCLEQMITNTTELTQDLDAAPTDDIPGPSTSTS.

The disordered stretch occupies residues 73–136; sequence DEPIDTSSHR…PASLPRTVQP (64 aa). The span at 102 to 120 shows a compositional bias: polar residues; sequence TPGSSQYTVRNLSNLSGSP. In terms of domain architecture, CRC spans 173-288; that stretch reads QRKPCNCTKS…KCKGCQNTET (116 aa). A DNA-binding region spans residues 175-188; that stretch reads KPCNCTKSQCLKLY. C177, C179, C184, C189, C191, C198, C201, C203, and C206 together coordinate Zn(2+). The tract at residues 235–250 is linker; sequence IGIARGGITDIERLHQ. Zn(2+) is bound by residues C253, C255, C260, C265, C267, C274, C278, C280, and C283. The tract at residues 253–266 is DNA-binding; sequence CHCKKSGCLKNYCE. A disordered region spans residues 415-435; the sequence is LTQDLDAAPTDDIPGPSTSTS.

Belongs to the lin-54 family. Component of the DRM complex, at least composed of lin-9, lin-35, lin-37, lin-52, lin-53, lin-54- dpl-1 and efl-1.

The protein localises to the nucleus. It localises to the chromosome. Functionally, synthetic multivulva class B (synMuvB) protein. SynMuvB proteins are required to repress the induction of vulval development by Ras signaling and probably act by forming the multiprotein DRM complex that repress transcription. The polypeptide is Protein lin-54 (Caenorhabditis elegans).